A 240-amino-acid chain; its full sequence is Ribonuclease 3 (240 aa).

The 127-residue stretch at 10–136 (VREFQETVGV…LIGAVYLDRG (127 aa)) folds into the RNase III domain. Glu-49 is a binding site for Mg(2+). The active site involves Asp-53. Residues Asp-122 and Glu-125 each coordinate Mg(2+). Residue Glu-125 is part of the active site. Residues 163–231 (DWKTSLQELT…AESAWKAIRA (69 aa)) enclose the DRBM domain. The tract at residues 205–240 (TYGSGEGRSKKEAEQQAAESAWKAIRAATEKAKQES) is disordered. Over residues 219-228 (QQAAESAWKA) the composition is skewed to low complexity.

The protein belongs to the ribonuclease III family. As to quaternary structure, homodimer. Requires Mg(2+) as cofactor.

The protein resides in the cytoplasm. It catalyses the reaction Endonucleolytic cleavage to 5'-phosphomonoester.. In terms of biological role, digests double-stranded RNA. Involved in the processing of primary rRNA transcript to yield the immediate precursors to the large and small rRNAs (23S and 16S). Processes some mRNAs, and tRNAs when they are encoded in the rRNA operon. Processes pre-crRNA and tracrRNA of type II CRISPR loci if present in the organism. This Thermobifida fusca (strain YX) protein is Ribonuclease 3.